A 201-amino-acid polypeptide reads, in one-letter code: uncharacterized protein (201 aa).

The protein belongs to the methyltransferase superfamily.

This is an uncharacterized protein from Bacillus subtilis (strain 168).